A 134-amino-acid chain; its full sequence is Larval cuticle protein A3A (134 aa).

Repeat 1 spans residues 23–26; that stretch reads AAPV. Residues 38-80 are disordered; it reads DPHPQYSYGYDIQDGLTGDSKNQQETRDGDVVQGSYSLVDPDG. Residues 40–106 form the Chitin-binding type R&amp;R domain; sequence HPQYSYGYDI…AVVHREPLVA (67 aa). Repeat unit 2 spans residues 111–114; that stretch reads AAPA.

Component of the cuticle of the larva of Tenebrio molitor. The sequence is that of Larval cuticle protein A3A from Tenebrio molitor (Yellow mealworm beetle).